A 396-amino-acid polypeptide reads, in one-letter code: Mannonate dehydratase (396 aa).

The protein belongs to the mannonate dehydratase family. The cofactor is Fe(2+). Mn(2+) is required as a cofactor.

The catalysed reaction is D-mannonate = 2-dehydro-3-deoxy-D-gluconate + H2O. The protein operates within carbohydrate metabolism; pentose and glucuronate interconversion. In terms of biological role, catalyzes the dehydration of D-mannonate. This Serratia proteamaculans (strain 568) protein is Mannonate dehydratase.